The sequence spans 441 residues: Ribosomal protein uS12 methylthiotransferase RimO (441 aa).

In terms of domain architecture, MTTase N-terminal spans 8–118 (PKIGFVSLGC…VLEHVHHYVP (111 aa)). Cys-17, Cys-53, Cys-82, Cys-150, Cys-154, and Cys-157 together coordinate [4Fe-4S] cluster. The 238-residue stretch at 136–373 (LTPRHYAYLK…MQLQQQISAE (238 aa)) folds into the Radical SAM core domain. Residues 376 to 441 (QEKVGREILV…DEYDLWGSRV (66 aa)) enclose the TRAM domain.

It belongs to the methylthiotransferase family. RimO subfamily. The cofactor is [4Fe-4S] cluster.

The protein resides in the cytoplasm. The catalysed reaction is L-aspartate(89)-[ribosomal protein uS12]-hydrogen + (sulfur carrier)-SH + AH2 + 2 S-adenosyl-L-methionine = 3-methylsulfanyl-L-aspartate(89)-[ribosomal protein uS12]-hydrogen + (sulfur carrier)-H + 5'-deoxyadenosine + L-methionine + A + S-adenosyl-L-homocysteine + 2 H(+). Catalyzes the methylthiolation of an aspartic acid residue of ribosomal protein uS12. This is Ribosomal protein uS12 methylthiotransferase RimO from Shigella sonnei (strain Ss046).